The following is a 273-amino-acid chain: Dermonecrotic toxin LdSicTox-alphaIB1aiv (273 aa).

The active site involves H5. Mg(2+)-binding residues include E25 and D27. The active-site Nucleophile is the H41. Intrachain disulfides connect C45–C51 and C47–C190. D85 contacts Mg(2+). Residue N250 is glycosylated (N-linked (GlcNAc...) asparagine).

The protein belongs to the arthropod phospholipase D family. Class II subfamily. The cofactor is Mg(2+). Expressed by the venom gland.

Its subcellular location is the secreted. The enzyme catalyses an N-(acyl)-sphingosylphosphocholine = an N-(acyl)-sphingosyl-1,3-cyclic phosphate + choline. The catalysed reaction is an N-(acyl)-sphingosylphosphoethanolamine = an N-(acyl)-sphingosyl-1,3-cyclic phosphate + ethanolamine. It carries out the reaction a 1-acyl-sn-glycero-3-phosphocholine = a 1-acyl-sn-glycero-2,3-cyclic phosphate + choline. It catalyses the reaction a 1-acyl-sn-glycero-3-phosphoethanolamine = a 1-acyl-sn-glycero-2,3-cyclic phosphate + ethanolamine. Its function is as follows. Dermonecrotic toxins cleave the phosphodiester linkage between the phosphate and headgroup of certain phospholipids (sphingolipid and lysolipid substrates), forming an alcohol (often choline) and a cyclic phosphate. This toxin acts on sphingomyelin (SM). It may also act on ceramide phosphoethanolamine (CPE), lysophosphatidylcholine (LPC) and lysophosphatidylethanolamine (LPE), but not on lysophosphatidylserine (LPS), and lysophosphatidylglycerol (LPG). It acts by transphosphatidylation, releasing exclusively cyclic phosphate products as second products. Induces dermonecrosis, hemolysis, increased vascular permeability, edema, inflammatory response, and platelet aggregation. The protein is Dermonecrotic toxin LdSicTox-alphaIB1aiv of Loxosceles deserta (Desert recluse spider).